The chain runs to 177 residues: Phycocyanin PC645 beta subunit (177 aa).

Tyr-18 is a binding site for mesobiliverdin. The (2R,3E)-phycocyanobilin site is built by Lys-28, Asn-35, and Asp-39. 15,16-dihydrobiliverdin is bound by residues Cys-50, Asp-54, and Cys-61. (2R,3E)-phycocyanobilin-binding residues include Asn-72, Arg-77, Cys-82, Arg-84, and Asp-85. Residue Gln-148 participates in 15,16-dihydrobiliverdin binding. (2R,3E)-phycocyanobilin contacts are provided by Pro-154, Gly-156, and Cys-158.

Belongs to the phycobiliprotein family. Heterotetramer of 2 different alpha chains and 2 identical beta chains which form 2 alpha-beta heterodimers within the heterotetramer. Post-translationally, contains two phycocyanobilin chromophores, one mesobiliverdin chromophore and one 15,16-dihydrobiliverdin chromophore with binding mediated by both the alpha and beta subunits.

The protein localises to the plastid. It is found in the chloroplast thylakoid membrane. Its function is as follows. Light-harvesting photosynthetic tetrapyrrole chromophore-protein from the phycobiliprotein complex. The polypeptide is Phycocyanin PC645 beta subunit (Chroomonas sp. (strain CCMP270)).